Consider the following 257-residue polypeptide: Thiazole synthase (257 aa).

Residue K97 is the Schiff-base intermediate with DXP of the active site. 1-deoxy-D-xylulose 5-phosphate-binding positions include G158, 184 to 185 (AG), and 206 to 207 (NT).

This sequence belongs to the ThiG family. As to quaternary structure, homotetramer. Forms heterodimers with either ThiH or ThiS.

It is found in the cytoplasm. The enzyme catalyses [ThiS sulfur-carrier protein]-C-terminal-Gly-aminoethanethioate + 2-iminoacetate + 1-deoxy-D-xylulose 5-phosphate = [ThiS sulfur-carrier protein]-C-terminal Gly-Gly + 2-[(2R,5Z)-2-carboxy-4-methylthiazol-5(2H)-ylidene]ethyl phosphate + 2 H2O + H(+). It functions in the pathway cofactor biosynthesis; thiamine diphosphate biosynthesis. Its function is as follows. Catalyzes the rearrangement of 1-deoxy-D-xylulose 5-phosphate (DXP) to produce the thiazole phosphate moiety of thiamine. Sulfur is provided by the thiocarboxylate moiety of the carrier protein ThiS. In vitro, sulfur can be provided by H(2)S. In Phocaeicola vulgatus (strain ATCC 8482 / DSM 1447 / JCM 5826 / CCUG 4940 / NBRC 14291 / NCTC 11154) (Bacteroides vulgatus), this protein is Thiazole synthase.